The sequence spans 449 residues: Mycosin-1 (449 aa).

A signal peptide spans 1 to 23 (MQRVAVMVLAVLLALFSAPPAWA). The cysteines at positions 51 and 120 are disulfide-linked. One can recognise a Peptidase S8 domain in the interval 66–389 (PWANDYLRIQ…AGVIDPVAAL (324 aa)). Active-site charge relay system residues include Asp-92 and His-123. 2 disordered regions span residues 160-179 (FQPK…QTAG) and 240-259 (TGQD…SDPR). Residues 170–179 (NDPNTTQTAG) show a composition bias toward polar residues. A disulfide bond links Cys-206 and Cys-244. Ser-334 functions as the Charge relay system in the catalytic mechanism. The helical transmembrane segment at 421-441 (ITAVVIAGATLAFALGIGALA) threads the bilayer.

This sequence belongs to the peptidase S8 family.

It is found in the cell membrane. May play a dual role in regulation of ESX-1 secretion and virulence. Acts as a protease that cleaves EspB. This chain is Mycosin-1, found in Mycolicibacterium smegmatis (strain ATCC 700084 / mc(2)155) (Mycobacterium smegmatis).